The chain runs to 574 residues: Glucose-6-phosphate 1-dehydrogenase, chloroplastic (574 aa).

NADP(+) is bound by residues 93 to 100 and arginine 127; that span reads GASGDLAK. An intrachain disulfide couples cysteine 145 to cysteine 153. NADP(+) is bound at residue lysine 230. D-glucose 6-phosphate-binding positions include lysine 230, 260–264, glutamate 298, and aspartate 317; that span reads HYLGK. Residue histidine 322 is the Proton acceptor of the active site. Lysine 415 contributes to the NADP(+) binding site. Residues lysine 418 and lysine 423 each contribute to the D-glucose 6-phosphate site. NADP(+) is bound by residues arginine 424, arginine 428, and arginine 457. Residue glutamine 459 coordinates D-glucose 6-phosphate. NADP(+) is bound by residues 465–467 and arginine 550; that span reads YLK.

The protein belongs to the glucose-6-phosphate dehydrogenase family. Homodimer.

The protein localises to the plastid. It localises to the chloroplast. The enzyme catalyses D-glucose 6-phosphate + NADP(+) = 6-phospho-D-glucono-1,5-lactone + NADPH + H(+). The protein operates within carbohydrate degradation; pentose phosphate pathway; D-ribulose 5-phosphate from D-glucose 6-phosphate (oxidative stage): step 1/3. Regulated by metabolites. Post-translationally inactivated by cysteine-mediated redox modification via the ferredoxin-thioredoxin system in the light and this avoids futile cycles with photosynthetic CO2 fixation. Catalyzes the rate-limiting step of the oxidative pentose-phosphate pathway, which represents a route for the dissimilation of carbohydrates besides glycolysis. The main function of this enzyme is to provide reducing power (NADPH) and pentose phosphates for fatty acid and nucleic acid synthesis which are involved in membrane synthesis and cell division. The chain is Glucose-6-phosphate 1-dehydrogenase, chloroplastic (G6PD) from Spinacia oleracea (Spinach).